The chain runs to 445 residues: Tubulin beta-5 chain (445 aa).

The GTP site is built by Gln11, Glu69, Ser138, Gly142, Thr143, Gly144, Asn204, and Asn226. Glu69 contacts Mg(2+). Residues 420-445 form a disordered region; it reads AEYQQYQDATADDEYEEGEEEEEEAA. Residues 429–445 are compositionally biased toward acidic residues; that stretch reads TADDEYEEGEEEEEEAA.

Belongs to the tubulin family. Dimer of alpha and beta chains. A typical microtubule is a hollow water-filled tube with an outer diameter of 25 nm and an inner diameter of 15 nM. Alpha-beta heterodimers associate head-to-tail to form protofilaments running lengthwise along the microtubule wall with the beta-tubulin subunit facing the microtubule plus end conferring a structural polarity. Microtubules usually have 13 protofilaments but different protofilament numbers can be found in some organisms and specialized cells. Requires Mg(2+) as cofactor.

The protein resides in the cytoplasm. Its subcellular location is the cytoskeleton. Its function is as follows. Tubulin is the major constituent of microtubules, a cylinder consisting of laterally associated linear protofilaments composed of alpha- and beta-tubulin heterodimers. Microtubules grow by the addition of GTP-tubulin dimers to the microtubule end, where a stabilizing cap forms. Below the cap, tubulin dimers are in GDP-bound state, owing to GTPase activity of alpha-tubulin. The polypeptide is Tubulin beta-5 chain (Gossypium hirsutum (Upland cotton)).